Reading from the N-terminus, the 521-residue chain is tRNA (adenine(58)-N(1))-methyltransferase non-catalytic subunit trm6 (521 aa).

Disordered stretches follow at residues 1–24, 305–336, and 452–521; these read METE…NNNN, IYDK…AKTI, and QKST…KIDE. Residues 12–24 show a composition bias toward low complexity; that stretch reads KSTTSNTNDNNNN. A compositionally biased stretch (basic and acidic residues) spans 308–334; that stretch reads KQVKEKEKEKEKDENVKDEKESGEEAK. Low complexity-rich tracts occupy residues 452–476 and 487–502; these read QKST…TKTT and DATT…AATT. The segment covering 510 to 521 has biased composition (basic and acidic residues); sequence SESALKKRKIDE.

This sequence belongs to the TRM6/GCD10 family. As to quaternary structure, heterotetramer; composed of two copies of trmt6 and two copies of trmt61a.

It localises to the nucleus. In terms of biological role, substrate-binding subunit of tRNA (adenine-N(1)-)-methyltransferase, which catalyzes the formation of N(1)-methyladenine at position 58 (m1A58) in initiator methionyl-tRNA. This is tRNA (adenine(58)-N(1))-methyltransferase non-catalytic subunit trm6 (trmt6) from Dictyostelium discoideum (Social amoeba).